The primary structure comprises 459 residues: Protoheme IX farnesyltransferase (459 aa).

Residues 1–184 (MSRNTATQFV…AYVQLMKPRL (184 aa)) are unknown. The next 12 membrane-spanning stretches (helical) occupy residues 9–29 (FVAVLAAAAMGVYSLLVLGAT), 66–86 (AAALTGLAVVGAAVLAWRTGA), 93–113 (AVTLALALYPVQVVIGAYTAM), 123–143 (VHLTLGVGIFASLVVALAWTL), 184–204 (LMWLLCLVAGAGMALASSQLG), 211–231 (AATVVLTLGGGVLSIGASGTF), 262–282 (LAFGVVLGVASLAAFAAVNLL), 284–304 (AVLGLTAIAFYSIVYTLVLKP), 325–345 (WVAVTGAVGVGGVVLAGVIFL), 382–402 (HIVYYIGATLASAVVLAELTG), 403–423 (LGPLYAATTVLLGAVFLYFAI), and 438–458 (FHASNAYLGCLLVAVVLDTMV). The protoheme IX prenyltransferase stretch occupies residues 185–459 (MWLLCLVAGA…VAVVLDTMVV (275 aa)).

This sequence in the C-terminal section; belongs to the UbiA prenyltransferase family. Protoheme IX farnesyltransferase subfamily.

Its subcellular location is the cell membrane. The enzyme catalyses heme b + (2E,6E)-farnesyl diphosphate + H2O = Fe(II)-heme o + diphosphate. The protein operates within porphyrin-containing compound metabolism; heme O biosynthesis; heme O from protoheme: step 1/1. Its function is as follows. Converts heme B (protoheme IX) to heme O by substitution of the vinyl group on carbon 2 of heme B porphyrin ring with a hydroxyethyl farnesyl side group. In Halobacterium salinarum (strain ATCC 29341 / DSM 671 / R1), this protein is Protoheme IX farnesyltransferase (ctaB).